A 172-amino-acid chain; its full sequence is Adenine phosphoribosyltransferase (172 aa).

This sequence belongs to the purine/pyrimidine phosphoribosyltransferase family. As to quaternary structure, homodimer.

The protein resides in the cytoplasm. It carries out the reaction AMP + diphosphate = 5-phospho-alpha-D-ribose 1-diphosphate + adenine. It functions in the pathway purine metabolism; AMP biosynthesis via salvage pathway; AMP from adenine: step 1/1. Catalyzes a salvage reaction resulting in the formation of AMP, that is energically less costly than de novo synthesis. The sequence is that of Adenine phosphoribosyltransferase from Anaeromyxobacter dehalogenans (strain 2CP-C).